The chain runs to 323 residues: RING-H2 finger protein ATL32 (323 aa).

An N-terminal signal peptide occupies residues 1 to 28 (MMTRVECFNPHRWIILHVAIIIQSKANA). The helical transmembrane segment at 47–67 (TTVFAVLVTLFFLTGLLSVYI) threads the bilayer. The RING-type; atypical zinc-finger motif lies at 124–166 (CAICLNELEDHETVRLLPICNHLFHIDCIDTWLYSHATCPVCR). A disordered region spans residues 210-229 (SSEISGKFPRSNSTGHSMDR).

Belongs to the RING-type zinc finger family. ATL subfamily.

Its subcellular location is the membrane. It carries out the reaction S-ubiquitinyl-[E2 ubiquitin-conjugating enzyme]-L-cysteine + [acceptor protein]-L-lysine = [E2 ubiquitin-conjugating enzyme]-L-cysteine + N(6)-ubiquitinyl-[acceptor protein]-L-lysine.. The protein operates within protein modification; protein ubiquitination. The sequence is that of RING-H2 finger protein ATL32 (ATL32) from Arabidopsis thaliana (Mouse-ear cress).